Reading from the N-terminus, the 494-residue chain is Beta-glucosidase 29 (494 aa).

The N-terminal stretch at 1–28 (MAWLGIGMGRQIVPVLVFVAVLCSGVDA) is a signal peptide. Glutamine 49 provides a ligand contact to a beta-D-glucoside. Asparagine 103 carries an N-linked (GlcNAc...) asparagine glycan. Residues histidine 138 and 183-184 (NE) contribute to the a beta-D-glucoside site. The active-site Proton donor is glutamate 184. Residues cysteine 203 and cysteine 211 are joined by a disulfide bond. Asparagine 263 carries N-linked (GlcNAc...) asparagine glycosylation. Position 327 (tyrosine 327) interacts with a beta-D-glucoside. N-linked (GlcNAc...) asparagine glycosylation is present at asparagine 352. Glutamate 398 provides a ligand contact to a beta-D-glucoside. The Nucleophile role is filled by glutamate 398. A glycan (N-linked (GlcNAc...) asparagine) is linked at asparagine 406. Residues tryptophan 447, 454–455 (EW), and phenylalanine 463 each bind a beta-D-glucoside.

This sequence belongs to the glycosyl hydrolase 1 family.

It catalyses the reaction Hydrolysis of terminal, non-reducing beta-D-glucosyl residues with release of beta-D-glucose.. The chain is Beta-glucosidase 29 (BGLU29) from Oryza sativa subsp. japonica (Rice).